The following is a 390-amino-acid chain: Succinate--CoA ligase [ADP-forming] subunit beta (390 aa).

Residues 9–244 form the ATP-grasp domain; it reads KEIFRKYGVP…LDEEEPTEVE (236 aa). ATP is bound by residues Lys46, 53–55, Glu99, Ala102, and Glu107; that span reads GRG. The Mg(2+) site is built by Asn199 and Asp213. Substrate contacts are provided by residues Asn264 and 321-323; that span reads GIV.

The protein belongs to the succinate/malate CoA ligase beta subunit family. As to quaternary structure, heterotetramer of two alpha and two beta subunits. Mg(2+) is required as a cofactor.

It catalyses the reaction succinate + ATP + CoA = succinyl-CoA + ADP + phosphate. The catalysed reaction is GTP + succinate + CoA = succinyl-CoA + GDP + phosphate. The protein operates within carbohydrate metabolism; tricarboxylic acid cycle; succinate from succinyl-CoA (ligase route): step 1/1. In terms of biological role, succinyl-CoA synthetase functions in the citric acid cycle (TCA), coupling the hydrolysis of succinyl-CoA to the synthesis of either ATP or GTP and thus represents the only step of substrate-level phosphorylation in the TCA. The beta subunit provides nucleotide specificity of the enzyme and binds the substrate succinate, while the binding sites for coenzyme A and phosphate are found in the alpha subunit. In Nautilia profundicola (strain ATCC BAA-1463 / DSM 18972 / AmH), this protein is Succinate--CoA ligase [ADP-forming] subunit beta.